Consider the following 213-residue polypeptide: Large ribosomal subunit protein uL1 (213 aa).

The protein belongs to the universal ribosomal protein uL1 family. Part of the 50S ribosomal subunit.

Functionally, binds directly to 23S rRNA. Probably involved in E site tRNA release. Protein L1 is also a translational repressor protein, it controls the translation of its operon by binding to its mRNA. The protein is Large ribosomal subunit protein uL1 of Methanosarcina acetivorans (strain ATCC 35395 / DSM 2834 / JCM 12185 / C2A).